The chain runs to 408 residues: Prenyltransferase criF (408 aa).

Dimethylallyl diphosphate-binding residues include Arg-94, Lys-181, Tyr-183, Arg-248, Lys-250, Tyr-252, Gln-334, Tyr-336, Tyr-400, and Tyr-404.

This sequence belongs to the tryptophan dimethylallyltransferase family. In terms of assembly, homodimer.

The catalysed reaction is preechinulin + dimethylallyl diphosphate = tardioxopiperazine B + diphosphate. It catalyses the reaction preechinulin + dimethylallyl diphosphate = tardioxopiperazine A + diphosphate. It carries out the reaction tardioxopiperazine A + dimethylallyl diphosphate = echinulin + diphosphate. The enzyme catalyses tardioxopiperazine A + dimethylallyl diphosphate = variecolorin L + diphosphate. The catalysed reaction is neoechinulin A + dimethylallyl diphosphate = variecolorin G + diphosphate. It catalyses the reaction neoechinulin A + dimethylallyl diphosphate = isoechinulin A + diphosphate. It carries out the reaction isoechinulin A + dimethylallyl diphosphate = dehydroechinulin + diphosphate. The enzyme catalyses neoechinulin B + dimethylallyl diphosphate = isoechinulin B + diphosphate. The protein operates within secondary metabolite biosynthesis. It participates in alkaloid biosynthesis. In terms of biological role, prenyltransferase; part of the gene cluster that mediates the biosynthesis of echinulin family alkaloid. The pathway begins with the biosynthesis of the cyclic dipeptide cyclo-L-Trp-L-Ala (cyclo-TA) by the NRPS criC via condensation of L-alanine and L-tryptophan. The prenyltransferase criA then catalyzes the first prenylation step, a reverse prenylation reaction at C2, to yield preechinulin. Preechinulin is the substrate of the cytochrome P450 monooxygenase criE that catalyzes the formation of the double bond between C10 and C11 to produce neoechulin A. The unique prenyltransferase criF functions as a competitive enzyme with criE for preechinulin metabolization and uses preechinulin for effective regiospecific prenylations. Preechinulin is prenylated by criF at C5 or C7. C7-prenylation leads to accumulation of tardioxopiperazine B without further modification by criF. In contrast, the C5-prenylated tardioxopiperazine A can be prenylated again by criF, predominantly at C7 to form echinulin or less frequently at C4 to give variecolorin L. CriF also accepts neoechilunin A to produce varlecolorin G (prenylation at C5) or isoechinulin A (prenylation at C7). CriF further converts isoechinulin A into dehydroechinulin. Moreover, a yet unidentified enzyme can also convert neoechilunin A into neoechilunin B by introducing a double bond between positions C14 and C17 and thus provides a further substrate to criF for C5 and C7 prenylation. In Aspergillus cristatus (Chinese Fuzhuan brick tea-fermentation fungus), this protein is Prenyltransferase criF.